The following is a 72-amino-acid chain: Translation initiation factor IF-1 (72 aa).

The S1-like domain occupies 1 to 72 (MSKDDVIEMQ…TRGRITWRAK (72 aa)).

Belongs to the IF-1 family. Component of the 30S ribosomal translation pre-initiation complex which assembles on the 30S ribosome in the order IF-2 and IF-3, IF-1 and N-formylmethionyl-tRNA(fMet); mRNA recruitment can occur at any time during PIC assembly.

The protein resides in the cytoplasm. Its function is as follows. One of the essential components for the initiation of protein synthesis. Stabilizes the binding of IF-2 and IF-3 on the 30S subunit to which N-formylmethionyl-tRNA(fMet) subsequently binds. Helps modulate mRNA selection, yielding the 30S pre-initiation complex (PIC). Upon addition of the 50S ribosomal subunit IF-1, IF-2 and IF-3 are released leaving the mature 70S translation initiation complex. The polypeptide is Translation initiation factor IF-1 (Clostridium kluyveri (strain ATCC 8527 / DSM 555 / NBRC 12016 / NCIMB 10680 / K1)).